The sequence spans 511 residues: Glucan endo-1,3-beta-glucosidase 1 (511 aa).

The signal sequence occupies residues 1 to 28 (MAFTSMVSTVPVLFFFFTLLLISANSSS). Asn109 is a glycosylation site (N-linked (GlcNAc...) asparagine). The active-site Proton donor is Glu137. Residues Asn192 and Asn274 are each glycosylated (N-linked (GlcNAc...) asparagine). Glu284 serves as the catalytic Nucleophile. Asn374, Asn378, Asn407, Asn473, and Asn480 each carry an N-linked (GlcNAc...) asparagine glycan. Cys382 and Cys445 are disulfide-bonded. Ala485 is lipidated: GPI-anchor amidated alanine. Residues 486 to 511 (AGEATSRSLSRGFCVTIMILVTFSIL) constitute a propeptide, removed in mature form.

It belongs to the glycosyl hydrolase 17 family. In terms of processing, contains two additional disulfide bonds.

The protein localises to the cell membrane. It carries out the reaction Hydrolysis of (1-&gt;3)-beta-D-glucosidic linkages in (1-&gt;3)-beta-D-glucans.. This is Glucan endo-1,3-beta-glucosidase 1 from Arabidopsis thaliana (Mouse-ear cress).